The sequence spans 121 residues: Small ribosomal subunit protein uS13 (121 aa).

Residues S94 to K121 are disordered. Positions S106–K121 are enriched in basic residues.

This sequence belongs to the universal ribosomal protein uS13 family. As to quaternary structure, part of the 30S ribosomal subunit. Forms a loose heterodimer with protein S19. Forms two bridges to the 50S subunit in the 70S ribosome.

In terms of biological role, located at the top of the head of the 30S subunit, it contacts several helices of the 16S rRNA. In the 70S ribosome it contacts the 23S rRNA (bridge B1a) and protein L5 of the 50S subunit (bridge B1b), connecting the 2 subunits; these bridges are implicated in subunit movement. Contacts the tRNAs in the A and P-sites. In Exiguobacterium sp. (strain ATCC BAA-1283 / AT1b), this protein is Small ribosomal subunit protein uS13.